We begin with the raw amino-acid sequence, 192 residues long: Ribosome maturation factor RimM (192 aa).

Positions 97-172 constitute a PRC barrel domain; sequence EDEYYLADLI…VVLADPPALV (76 aa). The tract at residues 168–192 is disordered; that stretch reads PPALVGEPEGPESPAEDDDGERHYD.

This sequence belongs to the RimM family. As to quaternary structure, binds ribosomal protein uS19.

The protein localises to the cytoplasm. An accessory protein needed during the final step in the assembly of 30S ribosomal subunit, possibly for assembly of the head region. Essential for efficient processing of 16S rRNA. May be needed both before and after RbfA during the maturation of 16S rRNA. It has affinity for free ribosomal 30S subunits but not for 70S ribosomes. The sequence is that of Ribosome maturation factor RimM from Caulobacter sp. (strain K31).